A 97-amino-acid chain; its full sequence is Aspartyl/glutamyl-tRNA(Asn/Gln) amidotransferase subunit C (97 aa).

This sequence belongs to the GatC family. As to quaternary structure, heterotrimer of A, B and C subunits.

The enzyme catalyses L-glutamyl-tRNA(Gln) + L-glutamine + ATP + H2O = L-glutaminyl-tRNA(Gln) + L-glutamate + ADP + phosphate + H(+). It catalyses the reaction L-aspartyl-tRNA(Asn) + L-glutamine + ATP + H2O = L-asparaginyl-tRNA(Asn) + L-glutamate + ADP + phosphate + 2 H(+). Allows the formation of correctly charged Asn-tRNA(Asn) or Gln-tRNA(Gln) through the transamidation of misacylated Asp-tRNA(Asn) or Glu-tRNA(Gln) in organisms which lack either or both of asparaginyl-tRNA or glutaminyl-tRNA synthetases. The reaction takes place in the presence of glutamine and ATP through an activated phospho-Asp-tRNA(Asn) or phospho-Glu-tRNA(Gln). This chain is Aspartyl/glutamyl-tRNA(Asn/Gln) amidotransferase subunit C, found in Sulfolobus acidocaldarius (strain ATCC 33909 / DSM 639 / JCM 8929 / NBRC 15157 / NCIMB 11770).